The following is a 333-amino-acid chain: B3 domain-containing protein At1g32030 (333 aa).

Composition is skewed to polar residues over residues 76 to 99 (VTVR…SLLD) and 134 to 143 (PQNASSSSTL). Positions 76–179 (VTVRNPEQNQ…SEPKKAKTPY (104 aa)) are disordered. Positions 220 to 328 (QSRLLMPFNT…ILSFALVLPP (109 aa)) form a DNA-binding region, TF-B3.

Its subcellular location is the nucleus. The protein is B3 domain-containing protein At1g32030 of Arabidopsis thaliana (Mouse-ear cress).